The chain runs to 577 residues: Arginine--tRNA ligase (577 aa).

The short motif at 122 to 132 (PNVAKEMHVGH) is the 'HIGH' region element.

Belongs to the class-I aminoacyl-tRNA synthetase family. Monomer.

Its subcellular location is the cytoplasm. It carries out the reaction tRNA(Arg) + L-arginine + ATP = L-arginyl-tRNA(Arg) + AMP + diphosphate. The chain is Arginine--tRNA ligase from Salmonella choleraesuis (strain SC-B67).